A 258-amino-acid polypeptide reads, in one-letter code: Deoxyribose-phosphate aldolase (258 aa).

The active-site Proton donor/acceptor is Asp-101. Lys-166 acts as the Schiff-base intermediate with acetaldehyde in catalysis. The active-site Proton donor/acceptor is the Lys-200.

It belongs to the DeoC/FbaB aldolase family. DeoC type 2 subfamily.

It is found in the cytoplasm. The catalysed reaction is 2-deoxy-D-ribose 5-phosphate = D-glyceraldehyde 3-phosphate + acetaldehyde. It participates in carbohydrate degradation; 2-deoxy-D-ribose 1-phosphate degradation; D-glyceraldehyde 3-phosphate and acetaldehyde from 2-deoxy-alpha-D-ribose 1-phosphate: step 2/2. Its function is as follows. Catalyzes a reversible aldol reaction between acetaldehyde and D-glyceraldehyde 3-phosphate to generate 2-deoxy-D-ribose 5-phosphate. In Haemophilus ducreyi (strain 35000HP / ATCC 700724), this protein is Deoxyribose-phosphate aldolase.